The following is a 279-amino-acid chain: uncharacterized protein (279 aa).

The region spanning 14–71 (ITPNQIKLLIALHKTKSQNEAAKLLNIKPSSFNIQLKRLENKLGVKLYYSSPNGTVLT) is the HTH lysR-type domain. Residues 31–50 (QNEAAKLLNIKPSSFNIQLK) constitute a DNA-binding region (H-T-H motif).

The protein belongs to the LysR transcriptional regulatory family.

This is an uncharacterized protein from Methanocaldococcus jannaschii (strain ATCC 43067 / DSM 2661 / JAL-1 / JCM 10045 / NBRC 100440) (Methanococcus jannaschii).